Reading from the N-terminus, the 409-residue chain is LIM/homeobox protein ttx-3 (409 aa).

2 consecutive LIM zinc-binding domains span residues 108-169 (NQCC…RYQK) and 171-232 (CRKC…VRST). Disordered regions lie at residues 245 to 299 (AVVA…RTSF) and 372 to 409 (MNPP…YTHL). Positions 247-267 (VAPPPPPPTTTTAPPPAAPEQ) are enriched in pro residues. Positions 292 to 351 (SKRMRTSFKHHQLRAMKTYFALNHNPDAKDLKQLAAKTNLTKRVLQVWFQNARAKYRREL) form a DNA-binding region, homeobox. Polar residues predominate over residues 382 to 409 (GHSTDGYQLNTPPLSSEIYSPNSNYTHL).

As to expression, expressed in the AIA, AIN and AIY interneurons, and in the NSM neurons. Expressed also in ADL and ASI sensory neurons in 60-70% of L2 larvae. Expression is also detected in head muscles of embryos and some early larvae but not late larvae or adults.

Its subcellular location is the nucleus. The protein resides in the perikaryon. The protein localises to the cell projection. It is found in the axon. In terms of biological role, transcription factor. Binds to a sequence motif, 5'-TTATTGGCTTCGTTAA-3', which may be involved in AIY interneuron function, in the regulatory elements of target genes; binding is more efficient, in vitro, together with homeobox protein ceh-10. Required for specification of the AIA and AIY interneurons and the NSM neurons. Positively regulates the expression of a number of genes including ceh-10, ceh-23, kal-1, hen-1, ser-2, unc-17 and sra-11 in AIY neurons, and cat-4, flp-4, bas-1, ptps-1 and mgl-1 in NSM neurons. In concert with WNT/beta-catenin signaling, initiates expression of homeobox ceh-10 in AIY, but not in the sister cells, SMDD motor neurons. Also acts in an autoregulatory feedback loop to maintain its own expression. Plays a role in the thermotactic response, olfactory imprinting, regulation of longevity, control of dauer formation and axon outgrowth and pathfinding. Not required for normal chemosensory behavior. The polypeptide is LIM/homeobox protein ttx-3 (Caenorhabditis elegans).